Consider the following 1516-residue polypeptide: Alpha-2-macroglobulin homolog (1516 aa).

The first 26 residues, methionine 1 to alanine 26, serve as a signal peptide directing secretion.

Belongs to the protease inhibitor I39 (alpha-2-macroglobulin) family. Bacterial alpha-2-macroglobulin subfamily.

In Pseudomonas aeruginosa (strain ATCC 15692 / DSM 22644 / CIP 104116 / JCM 14847 / LMG 12228 / 1C / PRS 101 / PAO1), this protein is Alpha-2-macroglobulin homolog.